Consider the following 379-residue polypeptide: Chaperone protein DnaJ (379 aa).

The region spanning 5-70 (DYYEVLGVQK…QKRAAYDRFG (66 aa)) is the J domain. A CR-type zinc finger spans residues 137-215 (GATTTVRVPT…CGGQGRVRKE (79 aa)). Positions 150, 153, 167, 170, 189, 192, 203, and 206 each coordinate Zn(2+). CXXCXGXG motif repeat units follow at residues 150–157 (CESCNGTG), 167–174 (CPTCNGHG), 189–196 (CPACHGVG), and 203–210 (CRTCGGQG).

It belongs to the DnaJ family. In terms of assembly, homodimer. Zn(2+) is required as a cofactor.

It localises to the cytoplasm. In terms of biological role, participates actively in the response to hyperosmotic and heat shock by preventing the aggregation of stress-denatured proteins and by disaggregating proteins, also in an autonomous, DnaK-independent fashion. Unfolded proteins bind initially to DnaJ; upon interaction with the DnaJ-bound protein, DnaK hydrolyzes its bound ATP, resulting in the formation of a stable complex. GrpE releases ADP from DnaK; ATP binding to DnaK triggers the release of the substrate protein, thus completing the reaction cycle. Several rounds of ATP-dependent interactions between DnaJ, DnaK and GrpE are required for fully efficient folding. Also involved, together with DnaK and GrpE, in the DNA replication of plasmids through activation of initiation proteins. This is Chaperone protein DnaJ from Rhodospirillum centenum (strain ATCC 51521 / SW).